The primary structure comprises 481 residues: Glutamate--tRNA ligase (481 aa).

The 'HIGH' region motif lies at 9–19 (PSPTGNLHIGT). The short motif at 249–253 (KLSKR) is the 'KMSKS' region element. An ATP-binding site is contributed by K252.

The protein belongs to the class-I aminoacyl-tRNA synthetase family. Glutamate--tRNA ligase type 1 subfamily. As to quaternary structure, monomer.

The protein localises to the cytoplasm. It catalyses the reaction tRNA(Glu) + L-glutamate + ATP = L-glutamyl-tRNA(Glu) + AMP + diphosphate. Its function is as follows. Catalyzes the attachment of glutamate to tRNA(Glu) in a two-step reaction: glutamate is first activated by ATP to form Glu-AMP and then transferred to the acceptor end of tRNA(Glu). The sequence is that of Glutamate--tRNA ligase from Picosynechococcus sp. (strain ATCC 27264 / PCC 7002 / PR-6) (Agmenellum quadruplicatum).